Here is a 333-residue protein sequence, read N- to C-terminus: Geranylgeranyl pyrophosphate synthase olcC (333 aa).

The isopentenyl diphosphate site is built by K61, R64, and H93. Residues D100 and D104 each coordinate Mg(2+). A dimethylallyl diphosphate-binding site is contributed by R109. R110 is an isopentenyl diphosphate binding site. Residues K187, T188, and Q221 each coordinate dimethylallyl diphosphate. A Mg(2+)-binding site is contributed by D224. Positions 228, 238, and 248 each coordinate dimethylallyl diphosphate.

The protein belongs to the FPP/GGPP synthase family. Requires Mg(2+) as cofactor.

The enzyme catalyses isopentenyl diphosphate + dimethylallyl diphosphate = (2E)-geranyl diphosphate + diphosphate. It carries out the reaction isopentenyl diphosphate + (2E)-geranyl diphosphate = (2E,6E)-farnesyl diphosphate + diphosphate. It catalyses the reaction isopentenyl diphosphate + (2E,6E)-farnesyl diphosphate = (2E,6E,10E)-geranylgeranyl diphosphate + diphosphate. It functions in the pathway secondary metabolite biosynthesis; terpenoid biosynthesis. In terms of biological role, geranylgeranyl pyrophosphate synthase; part of the gene cluster that mediates the biosynthesis of 15-deoxyoxalicine B. The first step of the pathway is the synthesis of nicotinyl-CoA from nicotinic acid by the nicotinic acid-CoA ligase olcI. Nicotinyl-CoA is then a substrate of polyketide synthase olcA to produce 4-hydroxy-6-(3-pyridinyl)-2H-pyran-2-one (HPPO) which is further prenylated by the polyprenyl transferase olcH to yield geranylgeranyl-HPPO. Geranylgeranyl pyrophosphate is provided by the cluster-specific geranylgeranyl pyrophosphate synthase olcC. The FAD-dependent monooxygenase olcE catalyzes the epoxidation of geranylgeranyl-HPPO and the terpene cyclase olcD catalyzes the cyclization of the terpenoid component, resulting in the formation of the tricyclic terpene moiety seen in predecaturin E. The cytochrome P450 monooxygenase then catalyzes the allylic oxidation of predecaturin E, which is followed by spirocylization with concomitant loss of one molecule of water to form decaturin E. Decaturin E is the substrate of the cytochrome P450 monooxygenase olcJ which hydroxylates it at the C-29 position to form decaturin F. The short-chain dehydrogenase/reductase olcF may catalyze the oxidation of decaturin F to generate the 29-hydroxyl-27-one intermediate, and subsequent hemiacetal formation probably leads to the formation of decaturin C. The dioxygenase olcK may be a peroxisomal enzyme that catalyzes the hydroxylation of decaturin C into decaturin A once decaturin C is shuttled into the peroxisome by the MFS transporter olcL. Finally the cytochrome P450 monooxygenase olcB catalyzes the oxidative rearrangement to yield 15-deoxyoxalicine B. In the absence of olcJ, decaturin E may be shunted to a pathway in which it is oxidized to a ketone, possibly by olcF, to form decaturin D, which undergoes further allylic oxidation to yield decaturin G. Moreover, in the absence of oclK or oclL, oclB can convert decaturin C into 15-deoxyoxalicine A. The polypeptide is Geranylgeranyl pyrophosphate synthase olcC (Penicillium canescens).